Here is a 1312-residue protein sequence, read N- to C-terminus: DNA repair protein RAD50 (1312 aa).

ATP is bound by residues Arg-13, Asn-38, Gly-39, Gly-41, Lys-42, Thr-43, Thr-44, Val-67, Asp-69, and Gln-159. Mg(2+) is bound at residue Thr-43. Gln-159 contacts Mg(2+). Coiled coils occupy residues 228-359 (TSKE…QADR), 401-598 (RERQ…AKLN), and 635-673 (SQDFESDLDRLKEEIEKSSKQRAMLAGATAVYSQFITQL). Ser-635 is modified (phosphoserine; by ATM). The Zinc-hook domain maps to 635 to 734 (SQDFESDLDR…RRDEMLGLVP (100 aa)). Residues Cys-681 and Cys-684 each coordinate Zn(2+). The residue at position 690 (Thr-690) is a Phosphothreonine. Coiled-coil stretches lie at residues 706–734 (RLAPDKLKSTESELKKKEKRRDEMLGLVP) and 789–1079 (LTDV…GRQK). Lys-959 carries the post-translational modification N6-acetyllysine.

The protein belongs to the SMC family. RAD50 subfamily. As to quaternary structure, component of the MRN complex composed of two heterodimers RAD50 and MRE11 associated with a single NBN. The MRN complexes dimerize on DNA to form joined MRN-MRN oligomers required for DNA double-strand break repair. As part of the MRN complex, interacts with MCM8 and MCM9; the interaction recruits the complex to DNA repair sites. Component of the BASC complex, at least composed of BRCA1, MSH2, MSH6, MLH1, ATM, BLM, RAD50, MRE11 and NBN. Found in a complex with TERF2. Interacts with RINT1. Interacts with BRCA1 via its N-terminal domain. Interacts with DCLRE1C/Artemis. Interacts with MRNIP. Interacts with CYREN (via XLF motif). Interacts with C1QBP and MRE11; interaction takes place in absence of DNA damage to form the MRC (MRE11-RAD50-C1QBP) complex that inhibits the activity of MRE11. In terms of assembly, (Microbial infection) Interacts with herpes simplex virus 1 protein UL12. Requires Zn(2+) as cofactor. In terms of processing, phosphorylation at Ser-635 by ATM in response to DNA damage is required for double-strand break (DSB) repair. As to expression, expressed at very low level in most tissues, except in testis where it is expressed at higher level. Expressed in fibroblasts.

The protein resides in the nucleus. The protein localises to the chromosome. Its subcellular location is the telomere. The enzyme catalyses ATP + H2O = ADP + phosphate + H(+). In terms of biological role, component of the MRN complex, which plays a central role in double-strand break (DSB) repair, DNA recombination, maintenance of telomere integrity and meiosis. The MRN complex is involved in the repair of DNA double-strand breaks (DSBs) via homologous recombination (HR), an error-free mechanism which primarily occurs during S and G2 phases. The complex (1) mediates the end resection of damaged DNA, which generates proper single-stranded DNA, a key initial steps in HR, and is (2) required for the recruitment of other repair factors and efficient activation of ATM and ATR upon DNA damage. The MRN complex possesses single-strand endonuclease activity and double-strand-specific 3'-5' exonuclease activity, which are provided by MRE11, to initiate end resection, which is required for single-strand invasion and recombination. Within the complex, RAD50 is both required to bind DNA ends and hold them in close proximity and regulate the activity of MRE11. RAD50 provides an ATP-dependent control of MRE11 by positioning DNA ends into the MRE11 active site: ATP-binding induces a large structural change from an open form with accessible MRE11 nuclease sites into a closed form. The MRN complex is also required for DNA damage signaling via activation of the ATM and ATR kinases: the nuclease activity of MRE11 is not required to activate ATM and ATR. The MRN complex is also required for the processing of R-loops. In telomeres the MRN complex may modulate t-loop formation. The sequence is that of DNA repair protein RAD50 from Homo sapiens (Human).